Here is a 551-residue protein sequence, read N- to C-terminus: Arginine--tRNA ligase (551 aa).

The 'HIGH' region motif lies at Ala-125–His-135.

This sequence belongs to the class-I aminoacyl-tRNA synthetase family. As to quaternary structure, monomer.

Its subcellular location is the cytoplasm. The catalysed reaction is tRNA(Arg) + L-arginine + ATP = L-arginyl-tRNA(Arg) + AMP + diphosphate. The protein is Arginine--tRNA ligase of Nitratidesulfovibrio vulgaris (strain ATCC 29579 / DSM 644 / CCUG 34227 / NCIMB 8303 / VKM B-1760 / Hildenborough) (Desulfovibrio vulgaris).